The following is a 238-amino-acid chain: Dephospho-CoA kinase (238 aa).

One can recognise a DPCK domain in the interval 3 to 233; the sequence is IIGLTGGVGT…QRPFASPPRA (231 aa). Position 11–16 (11–16) interacts with ATP; the sequence is GTGKST. Disordered stretches follow at residues 110–129 and 219–238; these read HGVP…VGFS and LASA…YSDG.

Belongs to the CoaE family.

It is found in the cytoplasm. The enzyme catalyses 3'-dephospho-CoA + ATP = ADP + CoA + H(+). Its pathway is cofactor biosynthesis; coenzyme A biosynthesis; CoA from (R)-pantothenate: step 5/5. Catalyzes the phosphorylation of the 3'-hydroxyl group of dephosphocoenzyme A to form coenzyme A. The polypeptide is Dephospho-CoA kinase (Synechococcus sp. (strain JA-2-3B'a(2-13)) (Cyanobacteria bacterium Yellowstone B-Prime)).